Here is a 737-residue protein sequence, read N- to C-terminus: DNA mismatch repair protein MLH1 (737 aa).

Disordered stretches follow at residues M1 to I21 and T378 to R416. Polar residues predominate over residues T378–V400.

The protein belongs to the DNA mismatch repair MutL/HexB family. As to quaternary structure, heterodimer of MLH1 and PMS1, called MutLalpha, which is the major MMR MutL activity correcting base-base mismatches as well as IDLs. The heterodimer binds double strand DNA independently of a mismatch with positive cooperativity and has more than one DNA binding site. Heterodimer of MLH1 and MLH3, called MutLbeta, which is involved in correction of a specific subset of IDLs when associated with MutSbeta. As to expression, ubiquitous.

The protein resides in the nucleus. Functionally, involved in DNA mismatch repair (MMR), correcting insertion-deletion loops (IDLs) resulting from DNA replication, DNA damage or from recombination events between non-identical sequences during meiosis. Component of the MutLbeta heterodimer, which probably forms a ternary complex with the MutSbeta heterodimer that initially recognizes the DNA mismatches. This complex is thought to be responsible for directing the downstream MMR events, including strand discrimination, excision, and resynthesis. Plays a major role in promoting meiotic crossing-over and is involved in maintaining the genetic stability of simple sequence repeats by correction of frameshift intermediates. In Arabidopsis thaliana (Mouse-ear cress), this protein is DNA mismatch repair protein MLH1 (MLH1).